A 372-amino-acid polypeptide reads, in one-letter code: Lipoyl synthase, mitochondrial (372 aa).

Cys-106, Cys-111, Cys-117, Cys-137, Cys-141, Cys-144, and Ser-352 together coordinate [4Fe-4S] cluster. Positions 122–341 (EYGTATATIM…EKAGNELGFL (220 aa)) constitute a Radical SAM core domain.

It belongs to the radical SAM superfamily. Lipoyl synthase family. It depends on [4Fe-4S] cluster as a cofactor.

The protein resides in the mitochondrion. The catalysed reaction is [[Fe-S] cluster scaffold protein carrying a second [4Fe-4S](2+) cluster] + N(6)-octanoyl-L-lysyl-[protein] + 2 oxidized [2Fe-2S]-[ferredoxin] + 2 S-adenosyl-L-methionine + 4 H(+) = [[Fe-S] cluster scaffold protein] + N(6)-[(R)-dihydrolipoyl]-L-lysyl-[protein] + 4 Fe(3+) + 2 hydrogen sulfide + 2 5'-deoxyadenosine + 2 L-methionine + 2 reduced [2Fe-2S]-[ferredoxin]. It functions in the pathway protein modification; protein lipoylation via endogenous pathway; protein N(6)-(lipoyl)lysine from octanoyl-[acyl-carrier-protein]: step 2/2. Catalyzes the radical-mediated insertion of two sulfur atoms into the C-6 and C-8 positions of the octanoyl moiety bound to the lipoyl domains of lipoate-dependent enzymes, thereby converting the octanoylated domains into lipoylated derivatives. The chain is Lipoyl synthase, mitochondrial (lias) from Xenopus laevis (African clawed frog).